The primary structure comprises 218 residues: Large ribosomal subunit protein uL3 (218 aa).

This sequence belongs to the universal ribosomal protein uL3 family. As to quaternary structure, part of the 50S ribosomal subunit. Forms a cluster with proteins L14 and L19.

Functionally, one of the primary rRNA binding proteins, it binds directly near the 3'-end of the 23S rRNA, where it nucleates assembly of the 50S subunit. This Corynebacterium diphtheriae (strain ATCC 700971 / NCTC 13129 / Biotype gravis) protein is Large ribosomal subunit protein uL3.